The following is a 269-amino-acid chain: 1-(5-phosphoribosyl)-5-[(5-phosphoribosylamino)methylideneamino] imidazole-4-carboxamide isomerase (269 aa).

The active-site Proton acceptor is D10. The active-site Proton donor is the D132.

This sequence belongs to the HisA/HisF family.

It is found in the cytoplasm. The enzyme catalyses 1-(5-phospho-beta-D-ribosyl)-5-[(5-phospho-beta-D-ribosylamino)methylideneamino]imidazole-4-carboxamide = 5-[(5-phospho-1-deoxy-D-ribulos-1-ylimino)methylamino]-1-(5-phospho-beta-D-ribosyl)imidazole-4-carboxamide. The protein operates within amino-acid biosynthesis; L-histidine biosynthesis; L-histidine from 5-phospho-alpha-D-ribose 1-diphosphate: step 4/9. The protein is 1-(5-phosphoribosyl)-5-[(5-phosphoribosylamino)methylideneamino] imidazole-4-carboxamide isomerase of Xylella fastidiosa (strain M12).